The sequence spans 641 residues: Threonine--tRNA ligase (641 aa).

One can recognise a TGS domain in the interval 1-61 (MPIITLPDGT…TQNSHIQIIT (61 aa)). Residues 242 to 533 (DHRKLGKKYS…LIENYSGNFP (292 aa)) are catalytic. Positions 333, 384, and 510 each coordinate Zn(2+).

This sequence belongs to the class-II aminoacyl-tRNA synthetase family. As to quaternary structure, homodimer. Zn(2+) is required as a cofactor.

Its subcellular location is the cytoplasm. It carries out the reaction tRNA(Thr) + L-threonine + ATP = L-threonyl-tRNA(Thr) + AMP + diphosphate + H(+). In terms of biological role, catalyzes the attachment of threonine to tRNA(Thr) in a two-step reaction: L-threonine is first activated by ATP to form Thr-AMP and then transferred to the acceptor end of tRNA(Thr). Also edits incorrectly charged L-seryl-tRNA(Thr). The chain is Threonine--tRNA ligase from Prochlorococcus marinus (strain NATL2A).